Here is a 134-residue protein sequence, read N- to C-terminus: S-protein homolog 18 (134 aa).

The signal sequence occupies residues 1–25 (MCPSSFRLILSVILIAFLFVGLCEA). Asparagine 87 carries an N-linked (GlcNAc...) asparagine glycan.

It belongs to the plant self-incompatibility (S1) protein family.

Its subcellular location is the secreted. The protein is S-protein homolog 18 of Arabidopsis thaliana (Mouse-ear cress).